A 283-amino-acid polypeptide reads, in one-letter code: Protein boule-like (283 aa).

Positions Met1–Pro25 are disordered. Residues Asn33–Arg110 enclose the RRM domain. Residues Pro160–Gln184 enclose the DAZ domain.

The protein belongs to the RRM DAZ family. As to quaternary structure, interacts with DAZ1 and DAZL.

The protein localises to the cytoplasm. Probable RNA-binding protein, which may be required during spermatogenesis. May act by binding to the 3'-UTR of mRNAs and regulating their translation. This chain is Protein boule-like (BOLL), found in Macaca fascicularis (Crab-eating macaque).